A 299-amino-acid polypeptide reads, in one-letter code: Taste receptor type 2 member 1 (299 aa).

The Extracellular segment spans residues 1-9 (MLESHLIIH). The helical transmembrane segment at 10-30 (FLLAVIQFLLGTFTNGIIVVV) threads the bilayer. The Cytoplasmic segment spans residues 31–55 (NGIDLIKHRKMAPLDLLLSCLAVSR). The chain crosses the membrane as a helical span at residues 56–76 (IFLQLFIFYVNVIVIFFIEFI). Residues 77-81 (MCSEN) lie on the Extracellular side of the membrane. Residues 82–102 (CAILLFINELELWLATWLGVF) form a helical membrane-spanning segment. The Cytoplasmic segment spans residues 103 to 124 (YCAKVASVPHPLFIWLKMKISK). Residues 125–145 (LVPWMILGSLLYVSMTCVFHS) form a helical membrane-spanning segment. The Extracellular portion of the chain corresponds to 146–178 (KYAGFMVPYFLRNFFSQNATIQKEDTPAIQIFS). Residue asparagine 163 is glycosylated (N-linked (GlcNAc...) asparagine). The chain crosses the membrane as a helical span at residues 179-199 (FVAEFLVPLLIFLVAVLLLIF). Residues 200–222 (SLGRHTRQMRNTVAGSRVPGRGA) are Cytoplasmic-facing. A helical transmembrane segment spans residues 223–243 (PISALLSILSFVILYFSHCMI). Topologically, residues 244–257 (KVFLSSLKFHVRSF) are extracellular. Residues 258-278 (ILPFFILVIGIYPSGHSLILI) form a helical membrane-spanning segment. The Cytoplasmic portion of the chain corresponds to 279 to 299 (LGNXKLKQNAKKFLLHSKCCQ).

This sequence belongs to the G-protein coupled receptor T2R family.

It localises to the membrane. Functionally, receptor that may play a role in the perception of bitterness and is gustducin-linked. May play a role in sensing the chemical composition of the gastrointestinal content. The activity of this receptor may stimulate alpha gustducin, mediate PLC-beta-2 activation and lead to the gating of TRPM5. This Pongo pygmaeus (Bornean orangutan) protein is Taste receptor type 2 member 1 (TAS2R1).